The following is a 376-amino-acid chain: uncharacterized protein (376 aa).

Over 1–280 (MPIPIIAHIA…RTPGFRRVVS (280 aa)) the chain is Lumenal. Ile-66, Asp-115, Arg-178, Lys-233, Val-270, and Thr-272 together coordinate NADP(+). Lys-233 functions as the Lowers pKa of active site Tyr in the catalytic mechanism. The helical transmembrane segment at 281–301 (FGKVWGLFLYLLLWPFWWLLL) threads the bilayer. Topologically, residues 302–376 (KGTIHGAQSF…KKKKIKKSKK (75 aa)) are cytoplasmic.

Belongs to the short-chain dehydrogenases/reductases (SDR) family.

Its subcellular location is the cytoplasm. The protein resides in the endoplasmic reticulum membrane. May be involved in lipid metabolism. This is an uncharacterized protein from Schizosaccharomyces pombe (strain 972 / ATCC 24843) (Fission yeast).